The following is a 143-amino-acid chain: Putative RNA polymerase II subunit B1 CTD phosphatase RPAP2 homolog (143 aa).

Residues 46–129 (SLLCEIGPPN…VPTSPLWLRD (84 aa)) form an RTR1-type zinc finger. Zn(2+)-binding residues include cysteine 69, cysteine 74, cysteine 105, and cysteine 109.

It belongs to the RPAP2 family.

It localises to the nucleus. The enzyme catalyses O-phospho-L-seryl-[protein] + H2O = L-seryl-[protein] + phosphate. It catalyses the reaction O-phospho-L-threonyl-[protein] + H2O = L-threonyl-[protein] + phosphate. In terms of biological role, putative RNA polymerase II subunit B1 C-terminal domain (CTD) phosphatase involved in RNA polymerase II transcription regulation. This is Putative RNA polymerase II subunit B1 CTD phosphatase RPAP2 homolog from Drosophila melanogaster (Fruit fly).